The following is a 360-amino-acid chain: Aminomethyltransferase (360 aa).

This sequence belongs to the GcvT family. The glycine cleavage system is composed of four proteins: P, T, L and H.

The enzyme catalyses N(6)-[(R)-S(8)-aminomethyldihydrolipoyl]-L-lysyl-[protein] + (6S)-5,6,7,8-tetrahydrofolate = N(6)-[(R)-dihydrolipoyl]-L-lysyl-[protein] + (6R)-5,10-methylene-5,6,7,8-tetrahydrofolate + NH4(+). Functionally, the glycine cleavage system catalyzes the degradation of glycine. In Methylococcus capsulatus (strain ATCC 33009 / NCIMB 11132 / Bath), this protein is Aminomethyltransferase.